Consider the following 135-residue polypeptide: Aspartate 1-decarboxylase (135 aa).

Residue serine 25 is the Schiff-base intermediate with substrate; via pyruvic acid of the active site. Residue serine 25 is modified to Pyruvic acid (Ser). Residue threonine 57 participates in substrate binding. The active-site Proton donor is the tyrosine 58. 73-75 contributes to the substrate binding site; it reads GAA.

The protein belongs to the PanD family. As to quaternary structure, heterooctamer of four alpha and four beta subunits. Requires pyruvate as cofactor. Post-translationally, is synthesized initially as an inactive proenzyme, which is activated by self-cleavage at a specific serine bond to produce a beta-subunit with a hydroxyl group at its C-terminus and an alpha-subunit with a pyruvoyl group at its N-terminus.

The protein resides in the cytoplasm. It carries out the reaction L-aspartate + H(+) = beta-alanine + CO2. It functions in the pathway cofactor biosynthesis; (R)-pantothenate biosynthesis; beta-alanine from L-aspartate: step 1/1. Functionally, catalyzes the pyruvoyl-dependent decarboxylation of aspartate to produce beta-alanine. In Mycolicibacterium vanbaalenii (strain DSM 7251 / JCM 13017 / BCRC 16820 / KCTC 9966 / NRRL B-24157 / PYR-1) (Mycobacterium vanbaalenii), this protein is Aspartate 1-decarboxylase.